We begin with the raw amino-acid sequence, 57 residues long: Peptide BmKa1 (57 aa).

The N-terminal stretch at 1 to 22 (MKPRVFFLLFLLVAAMIETGES) is a signal peptide. Composition is skewed to acidic residues over residues 20-29 (GESEENEEGS) and 45-57 (VDNE…GDSD). The disordered stretch occupies residues 20–57 (GESEENEEGSNESGKSTEAKNTDASVDNEDSDIDGDSD).

Belongs to the non-disulfide-bridged peptide (NDBP) superfamily. In terms of tissue distribution, expressed by the venom gland.

It localises to the secreted. The sequence is that of Peptide BmKa1 from Olivierus martensii (Manchurian scorpion).